The sequence spans 238 residues: tRNA1(Val) (adenine(37)-N6)-methyltransferase (238 aa).

It belongs to the methyltransferase superfamily. tRNA (adenine-N(6)-)-methyltransferase family.

The protein resides in the cytoplasm. It carries out the reaction adenosine(37) in tRNA1(Val) + S-adenosyl-L-methionine = N(6)-methyladenosine(37) in tRNA1(Val) + S-adenosyl-L-homocysteine + H(+). In terms of biological role, specifically methylates the adenine in position 37 of tRNA(1)(Val) (anticodon cmo5UAC). The polypeptide is tRNA1(Val) (adenine(37)-N6)-methyltransferase (Shewanella baltica (strain OS185)).